Reading from the N-terminus, the 787-residue chain is LPS-assembly protein LptD (787 aa).

The signal sequence occupies residues 1–39 (MPRKTLLPLVPACDAAPRRKRLAAALLAVPGLVPAVSQA).

The protein belongs to the LptD family. In terms of assembly, component of the lipopolysaccharide transport and assembly complex. Interacts with LptE and LptA.

The protein resides in the cell outer membrane. Functionally, together with LptE, is involved in the assembly of lipopolysaccharide (LPS) at the surface of the outer membrane. The protein is LPS-assembly protein LptD of Burkholderia thailandensis (strain ATCC 700388 / DSM 13276 / CCUG 48851 / CIP 106301 / E264).